Reading from the N-terminus, the 375-residue chain is tRNA-specific 2-thiouridylase MnmA 3 (375 aa).

Residues 11–18 (GMSGGIDS) and Met37 contribute to the ATP site. Cys104 functions as the Nucleophile in the catalytic mechanism. The cysteines at positions 104 and 201 are disulfide-linked. An ATP-binding site is contributed by Gly128. An interaction with tRNA region spans residues 150 to 152 (KDQ). The active-site Cysteine persulfide intermediate is Cys201. An interaction with tRNA region spans residues 309 to 310 (RY).

Belongs to the MnmA/TRMU family.

The protein resides in the cytoplasm. The catalysed reaction is S-sulfanyl-L-cysteinyl-[protein] + uridine(34) in tRNA + AH2 + ATP = 2-thiouridine(34) in tRNA + L-cysteinyl-[protein] + A + AMP + diphosphate + H(+). Its function is as follows. Catalyzes the 2-thiolation of uridine at the wobble position (U34) of tRNA, leading to the formation of s(2)U34. The sequence is that of tRNA-specific 2-thiouridylase MnmA 3 from Phocaeicola vulgatus (strain ATCC 8482 / DSM 1447 / JCM 5826 / CCUG 4940 / NBRC 14291 / NCTC 11154) (Bacteroides vulgatus).